The following is a 308-amino-acid chain: Glutaminase 1 (308 aa).

Substrate-binding residues include S64, N116, E161, N168, Y192, Y244, and V262.

It belongs to the glutaminase family. As to quaternary structure, homotetramer.

It catalyses the reaction L-glutamine + H2O = L-glutamate + NH4(+). This chain is Glutaminase 1, found in Halalkalibacterium halodurans (strain ATCC BAA-125 / DSM 18197 / FERM 7344 / JCM 9153 / C-125) (Bacillus halodurans).